The following is a 364-amino-acid chain: MEPVPEEARGVGDDEGELDCLTHMIGALLLQKEPENPENGDSKETIWSGELEWEDAQILDQPKTLHTVQCKICSMVKEGQPEINTENWPNKLKTQLIPKKVLGKIGEQFLKDARMVVFRSSQGEVLNLLITAMSSGFAGCIHFPSNPNCNIKALILIYSRDHQALVGFIPNNEDSFSERLQEILQGAKRKPGVKTPKQPQPEEPPPVEEDAIINELLWTGSLNWSTQASLEEPSISHKLECSVYIAIKNGDPGISAEDWPTDMPMVLMPSIYLGQFAGAFIKDSKLIILRSTPGEEHDSLASSMSAGSCGCARFSSEVVCKVIMLLYSSPRNAFLGFIPRDQANFVKRLREVLDEHRQKARNKE.

The interval 187–207 (AKRKPGVKTPKQPQPEEPPPV) is disordered.

This sequence belongs to the Mediator complex subunit 25 family. PTOV1 subfamily.

This chain is Protein PTOV1 homolog, found in Drosophila melanogaster (Fruit fly).